The chain runs to 560 residues: Terminal uridylyltransferase Tailor (560 aa).

Positions Glu169 to Gln197 are disordered. Residues Pro176 to Gln188 are compositionally biased toward low complexity. Mg(2+) contacts are provided by Asp278 and Asp280. The 68-residue stretch at Leu455 to His522 folds into the PAP-associated domain.

The cofactor is Mg(2+).

Its subcellular location is the cytoplasm. It catalyses the reaction RNA(n) + UTP = RNA(n)-3'-uridine ribonucleotide + diphosphate. Its function is as follows. Uridylyltransferase which mediates terminal uridylation of miRNAs, leading to their degradation. Has high specificity for splicing-derived miRNAs (mirtrons) and other miRNA substrates containing a 3'-G terminal nucleotide. Appears to be a major suppressor of mirtron biogenesis. This Drosophila melanogaster (Fruit fly) protein is Terminal uridylyltransferase Tailor.